A 135-amino-acid polypeptide reads, in one-letter code: C-type lectin Cal (135 aa).

Intrachain disulfides connect cysteine 3–cysteine 14, cysteine 31–cysteine 131, cysteine 38–cysteine 133, and cysteine 106–cysteine 123. Positions 10 to 132 constitute a C-type lectin domain; that stretch reads MNGLCYKIFN…CESKDAFLCQ (123 aa). The Ca(2+) site is built by glutamine 96, aspartate 98, glutamate 104, asparagine 119, and aspartate 120. Residues 96 to 98 carry the Galactose-binding motif; it reads QPD.

This sequence belongs to the true venom lectin family. As to quaternary structure, homodecamer of disulfide-linked dimers arranged in two pseudo-5-fold symmetric pentamers. In terms of tissue distribution, expressed by the venom gland.

The protein resides in the secreted. Functionally, galactose-binding protein which recognizes specific carbohydrate structures and agglutinates a variety of animal cells by binding to cell-surface glycoproteins and glycolipids. Calcium-dependent lectin. Shows high hemagglutinating activity (MHC=10 ng/ml). This chain is C-type lectin Cal, found in Crotalus atrox (Western diamondback rattlesnake).